Reading from the N-terminus, the 160-residue chain is MSFNHFDDQGRAIMVDVSGKQPTLRTATAAATVSMQPDTLADLLAGRTTKGDVLGVARIAGIAAAKKTPELIPLSHPLAIHHAAIDFDTDQACGTVTVRATVRAFERTGVEMEAMTSAAVAALTIYDMCKGADKGITIGQIRLLFKEGGKSGTWQREEGQ.

Substrate contacts are provided by residues 74–76 and 112–113; these read LSH and ME. The active site involves Asp127.

This sequence belongs to the MoaC family. In terms of assembly, homohexamer; trimer of dimers.

The catalysed reaction is (8S)-3',8-cyclo-7,8-dihydroguanosine 5'-triphosphate = cyclic pyranopterin phosphate + diphosphate. The protein operates within cofactor biosynthesis; molybdopterin biosynthesis. In terms of biological role, catalyzes the conversion of (8S)-3',8-cyclo-7,8-dihydroguanosine 5'-triphosphate to cyclic pyranopterin monophosphate (cPMP). This Geobacter sulfurreducens (strain ATCC 51573 / DSM 12127 / PCA) protein is Cyclic pyranopterin monophosphate synthase.